A 169-amino-acid chain; its full sequence is NADH dehydrogenase [ubiquinone] 1 alpha subcomplex assembly factor 2 (169 aa).

The disordered stretch occupies residues 116–169 (TSEELLPPPVQTQIKGHASAPYFGKEEPSVAPSSTGKTFQPGSWMPRDGKSHNQ). Residue Ser134 is modified to Phosphoserine. The segment covering 146-156 (APSSTGKTFQP) has biased composition (polar residues).

Belongs to the complex I NDUFA12 subunit family. As to quaternary structure, interacts with ARMC9. Highly expressed in ESCC cells. Also expressed in heart, skeletal muscle, liver, and in fibroblasts.

It is found in the mitochondrion. Functionally, acts as a molecular chaperone for mitochondrial complex I assembly. Complex I functions in the transfer of electrons from NADH to the respiratory chain. The immediate electron acceptor for the enzyme is believed to be ubiquinone. Is involved in the initial steps of cilia formation, including removal of CP110 from the mother centrioles, docking of membrane vesicles to the mother centrioles, and establishment of the transition zone. The sequence is that of NADH dehydrogenase [ubiquinone] 1 alpha subcomplex assembly factor 2 (NDUFAF2) from Homo sapiens (Human).